We begin with the raw amino-acid sequence, 347 residues long: Phosphate acyltransferase (347 aa).

The protein belongs to the PlsX family. As to quaternary structure, homodimer. Probably interacts with PlsY.

It localises to the cytoplasm. It catalyses the reaction a fatty acyl-[ACP] + phosphate = an acyl phosphate + holo-[ACP]. It participates in lipid metabolism; phospholipid metabolism. In terms of biological role, catalyzes the reversible formation of acyl-phosphate (acyl-PO(4)) from acyl-[acyl-carrier-protein] (acyl-ACP). This enzyme utilizes acyl-ACP as fatty acyl donor, but not acyl-CoA. The chain is Phosphate acyltransferase from Pediococcus pentosaceus (strain ATCC 25745 / CCUG 21536 / LMG 10740 / 183-1w).